A 289-amino-acid chain; its full sequence is Protease HtpX homolog (289 aa).

The next 2 membrane-spanning stretches (helical) occupy residues 11–31 (AALF…IAAG) and 34–54 (STTP…YGYW). Histidine 138 contributes to the Zn(2+) binding site. The active site involves glutamate 139. Position 142 (histidine 142) interacts with Zn(2+). 2 helical membrane passes run 152–172 (SVVA…LIFG) and 182–202 (LATI…QMAI). Glutamate 207 lines the Zn(2+) pocket.

This sequence belongs to the peptidase M48B family. Zn(2+) is required as a cofactor.

The protein resides in the cell membrane. This chain is Protease HtpX homolog, found in Paenarthrobacter aurescens (strain TC1).